The chain runs to 318 residues: Methionyl-tRNA formyltransferase (318 aa).

114–117 (SLLP) contributes to the (6S)-5,6,7,8-tetrahydrofolate binding site.

It belongs to the Fmt family.

The enzyme catalyses L-methionyl-tRNA(fMet) + (6R)-10-formyltetrahydrofolate = N-formyl-L-methionyl-tRNA(fMet) + (6S)-5,6,7,8-tetrahydrofolate + H(+). Attaches a formyl group to the free amino group of methionyl-tRNA(fMet). The formyl group appears to play a dual role in the initiator identity of N-formylmethionyl-tRNA by promoting its recognition by IF2 and preventing the misappropriation of this tRNA by the elongation apparatus. The polypeptide is Methionyl-tRNA formyltransferase (Protochlamydia amoebophila (strain UWE25)).